The sequence spans 249 residues: NADH-quinone oxidoreductase subunit C (249 aa).

The interval Met-1–Ser-29 is disordered.

This sequence belongs to the complex I 30 kDa subunit family. NDH-1 is composed of 14 different subunits. Subunits NuoB, C, D, E, F, and G constitute the peripheral sector of the complex.

The protein resides in the cell membrane. The catalysed reaction is a quinone + NADH + 5 H(+)(in) = a quinol + NAD(+) + 4 H(+)(out). NDH-1 shuttles electrons from NADH, via FMN and iron-sulfur (Fe-S) centers, to quinones in the respiratory chain. The immediate electron acceptor for the enzyme in this species is believed to be a menaquinone. Couples the redox reaction to proton translocation (for every two electrons transferred, four hydrogen ions are translocated across the cytoplasmic membrane), and thus conserves the redox energy in a proton gradient. The chain is NADH-quinone oxidoreductase subunit C from Saccharopolyspora erythraea (strain ATCC 11635 / DSM 40517 / JCM 4748 / NBRC 13426 / NCIMB 8594 / NRRL 2338).